A 312-amino-acid polypeptide reads, in one-letter code: MKEKGLIFDIQSFSVHDGPGCRTSVFFIGCPLQCKWCANPESWTKKKHIMVAENVCKWKNGCRSCINACSHDSIKFSEDGKLKISWDTCEKCETFDCVNMCPNNALKQCVKEYTVDELMTILKRDFNNWGSDGGVTFTGGDPLMHHEFLVEVLKKCYDSQIHKAIETSGYAKQEVFLEVLKYIDFAFIDVKNMDREKHKQGTGVYNDLILSNIEALKKSNWNGRLVLRQPTIAGYNDSDENAYKLIEFMNKNSLYEINLLKFHRLGETKWNQLGKEYEYSKYGDMTNEKMEHLQQLYLDNNIACYIGDNTPF.

The Radical SAM core domain occupies 16 to 299 (HDGPGCRTSV…MEHLQQLYLD (284 aa)). [4Fe-4S] cluster is bound by residues Cys30, Cys34, Cys37, Cys56, Cys62, Cys65, and Cys101. 36–38 (WCA) contributes to the S-adenosyl-L-methionine binding site. 2 consecutive 4Fe-4S ferredoxin-type domains span residues 47-79 (KHIM…FSED) and 80-112 (GKLK…CVKE). S-adenosyl-L-methionine-binding positions include Gly140, 189–191 (DVK), and His263.

Belongs to the organic radical-activating enzymes family. As to quaternary structure, monomer. [4Fe-4S] cluster serves as cofactor.

It carries out the reaction glycyl-[protein] + reduced [flavodoxin] + S-adenosyl-L-methionine = glycin-2-yl radical-[protein] + semiquinone [flavodoxin] + 5'-deoxyadenosine + L-methionine + H(+). In terms of biological role, catalyzes activation of 4-hydroxyphenylacetate decarboxylase under anaerobic conditions by generation of an organic free radical on a glycine residue, via a homolytic cleavage of S-adenosyl-L-methionine (SAM). The polypeptide is 4-hydroxyphenylacetate decarboxylase activating enzyme (Clostridium scatologenes).